Reading from the N-terminus, the 106-residue chain is Large ribosomal subunit protein uL24 (106 aa).

This sequence belongs to the universal ribosomal protein uL24 family. Part of the 50S ribosomal subunit.

One of two assembly initiator proteins, it binds directly to the 5'-end of the 23S rRNA, where it nucleates assembly of the 50S subunit. In terms of biological role, one of the proteins that surrounds the polypeptide exit tunnel on the outside of the subunit. This Azobacteroides pseudotrichonymphae genomovar. CFP2 protein is Large ribosomal subunit protein uL24.